The chain runs to 277 residues: Phosphate import ATP-binding protein PstB (277 aa).

Positions 31 to 272 constitute an ABC transporter domain; it reads LEVPGLNLFY…PAKKQTEDYI (242 aa). 63–70 is a binding site for ATP; the sequence is GPSGCGKS.

It belongs to the ABC transporter superfamily. Phosphate importer (TC 3.A.1.7) family. The complex is composed of two ATP-binding proteins (PstB), two transmembrane proteins (PstC and PstA) (Potential). PstS is missing in this species.

It is found in the cell inner membrane. It catalyses the reaction phosphate(out) + ATP + H2O = ADP + 2 phosphate(in) + H(+). Functionally, part of the ABC transporter complex PstSACB involved in phosphate import. Responsible for energy coupling to the transport system. In Pseudomonas aeruginosa (strain ATCC 15692 / DSM 22644 / CIP 104116 / JCM 14847 / LMG 12228 / 1C / PRS 101 / PAO1), this protein is Phosphate import ATP-binding protein PstB.